Reading from the N-terminus, the 422-residue chain is Aminopentol aminotransferase (422 aa).

The residue at position 258 (K258) is an N6-(pyridoxal phosphate)lysine.

Belongs to the class-III pyridoxal-phosphate-dependent aminotransferase family. Pyridoxal 5'-phosphate is required as a cofactor.

The protein resides in the cytoplasm. It carries out the reaction (2S,3S,5R,10R,12S,14S,15R,16R)-2-amino-12,16-dimethylicosane-3,5,10,14,15-pentol + pyruvate = (3S,5R,10R,12S,14S,15R,16R)-3,5,10,14,15-pentahydroxy-12,16-dimethylicosan-2-one + L-alanine. Its function is as follows. Involved in degradation of fumonisin B1. Catalyzes the deamination of aminopentol (HFB1) to 2-keto-HFB1. Pyruvate is the preferred cosubstrate, but it can also use several other alpha-keto acids as amino group acceptors. This chain is Aminopentol aminotransferase (fumI), found in Sphingopyxis macrogoltabida (Sphingomonas macrogoltabidus).